The sequence spans 215 residues: Pyrrolidone-carboxylate peptidase (215 aa).

Catalysis depends on residues glutamate 80, cysteine 143, and histidine 167.

It belongs to the peptidase C15 family. As to quaternary structure, homotetramer.

The protein localises to the cytoplasm. The enzyme catalyses Release of an N-terminal pyroglutamyl group from a polypeptide, the second amino acid generally not being Pro.. Its function is as follows. Removes 5-oxoproline from various penultimate amino acid residues except L-proline. This chain is Pyrrolidone-carboxylate peptidase, found in Bacillus cereus (strain ZK / E33L).